The primary structure comprises 354 residues: Protein angel (354 aa).

Residues 22-59 (VSSQAKGASGKRKQKAKEMESSHDRNRRWTSLGNQAEG) form a disordered region.

The protein belongs to the CCR4/nocturin family. As to expression, ubiquitously expressed in embryos.

This is Protein angel (angel) from Drosophila melanogaster (Fruit fly).